A 277-amino-acid polypeptide reads, in one-letter code: Tumor necrosis factor receptor superfamily member 4 (277 aa).

A signal peptide spans Met1–Gly28. At Leu29–Ala214 the chain is on the extracellular side. TNFR-Cys repeat units lie at residues His30 to Arg65 and Pro66 to Cys107. 8 disulfides stabilise this stretch: Cys31/Cys42, Cys43/Cys56, Cys46/Cys64, Cys67/Cys81, Cys84/Cys99, Cys87/Cys107, Cys109/Cys125, and Cys128/Cys141. One copy of the TNFR-Cys 3; truncated repeat lies at Arg108 to Ala126. One copy of the TNFR-Cys 4 repeat lies at Pro127–Glu167. N-linked (GlcNAc...) asparagine glycosylation is found at Asn146 and Asn160. A disulfide bridge connects residues Cys147 and Cys166. The segment at Ala158 to Val209 is disordered. A helical membrane pass occupies residues Val215–Leu235. At Ala236–Ile277 the chain is on the cytoplasmic side. A disordered region spans residues Pro248–Ile277.

In terms of assembly, interacts with TRAF2, TRAF3 and TRAF5. As to quaternary structure, (Microbial infection) Interacts with Human herpesvirus 6B/HHV-6B gQ1:gQ2 proteins.

The protein localises to the membrane. Receptor for TNFSF4/OX40L/GP34. Is a costimulatory molecule implicated in long-term T-cell immunity. Its function is as follows. (Microbial infection) Acts as a receptor for human herpesvirus 6B/HHV-6B. This is Tumor necrosis factor receptor superfamily member 4 (TNFRSF4) from Homo sapiens (Human).